Reading from the N-terminus, the 682-residue chain is Putative L-type lectin-domain containing receptor kinase I.1 (682 aa).

The signal sequence occupies residues 1 to 19 (MAQRLHLLLLLFLICFVNL). Residues 20-292 (ISFSSQQDLS…RPKKPEKTSP (273 aa)) lie on the Extracellular side of the membrane. A legume-lectin like region spans residues 27–264 (DLSFIYNGFN…YQYILGWSFS (238 aa)). N-linked (GlcNAc...) asparagine glycosylation is found at asparagine 60, asparagine 130, asparagine 187, asparagine 210, and asparagine 231. Residues 293–313 (LLIVLLIILAIIVMVVVGGFY) traverse the membrane as a helical segment. Over 314-682 (LYRRKKYAEV…SHTIIYGDGR (369 aa)) the chain is Cytoplasmic. The Protein kinase domain occupies 348–622 (FNKDGRLGRG…VQYINRHQRL (275 aa)). Residues 354-362 (LGRGGFGEV) and lysine 376 contribute to the ATP site. The active-site Proton acceptor is aspartate 472.

It in the C-terminal section; belongs to the protein kinase superfamily. Ser/Thr protein kinase family. In the N-terminal section; belongs to the leguminous lectin family.

Its subcellular location is the cell membrane. The catalysed reaction is L-seryl-[protein] + ATP = O-phospho-L-seryl-[protein] + ADP + H(+). The enzyme catalyses L-threonyl-[protein] + ATP = O-phospho-L-threonyl-[protein] + ADP + H(+). In terms of biological role, involved in resistance response to the pathogenic fungus Alternaria brassicicola. In Arabidopsis thaliana (Mouse-ear cress), this protein is Putative L-type lectin-domain containing receptor kinase I.1.